The sequence spans 154 residues: Transcriptional repressor NrdR (154 aa).

A zinc finger lies at cysteine 3–cysteine 34. In terms of domain architecture, ATP-cone spans proline 49–glutamate 139.

This sequence belongs to the NrdR family. Zn(2+) is required as a cofactor.

Negatively regulates transcription of bacterial ribonucleotide reductase nrd genes and operons by binding to NrdR-boxes. This chain is Transcriptional repressor NrdR, found in Pseudomonas putida (strain W619).